Here is a 548-residue protein sequence, read N- to C-terminus: MPHDRKNSSRRAWAALCAAVLAVSGALVGVAAPASAVPATIPLTITNDSGRGPIYLYVLGERDGVAGWADAGGTFHPWPGGVGPVPVPAPDASIAGPGPGQSVTIRLPKLSGRVYYSYGQKMTFQIVLDGRLVQPAVQNDSDPNRNILFNWTEYTLNDGGLWINSTQVDHWSAPYQVGVQRADGQVLSTGMLKPNGYEAFYTALEGAGWGGLVQRAPDGSRLRALNPSHGIDVGKISSASIDSYVTEVWNSYRTRDMVVTPFSHEPGTQFRGRVDGDWFRFRSGSGQEVAAFKKPDASSVYGCHKDLQAPNDHVVGPIARTLCAALVRTTALTNPNQPDANSAGFYQDARTNVYAKLAHQQMANGKAYAFAFDDVGAHESLVHDGNPQAAYIKLDPFTGTATPLGNGGSTEQPGTPGGLPAGTGALRIGSTLCLDVPWADPTDTNQVQLATCSGNAAQQWTRGTDGTVRALGKCLDVARSGTADGTAVWIYTCNGTGAQKWTYDSATKALRNPQSGKCLDAQGGAPLRDGQKVQLWTCNQTEAQRWTL.

A signal peptide (tat-type signal) is located at residues 1 to 36 (MPHDRKNSSRRAWAALCAAVLAVSGALVGVAAPASA). The interval 37–430 (VPATIPLTIT…AGTGALRIGS (394 aa)) is possesses beta-glucanase activity, but is unable to lyse viable cells. The region spanning 38–396 (PATIPLTITN…PQAAYIKLDP (359 aa)) is the GH64 domain. E153 (proton donor) is an active-site residue. D169 functions as the Proton acceptor in the catalytic mechanism. In terms of domain architecture, Ricin B-type lectin spans 422 to 548 (GTGALRIGST…NQTEAQRWTL (127 aa)). The interval 472–548 (GKCLDVARSG…NQTEAQRWTL (77 aa)) is essential for the lytic activity, but not for the beta-glucanase function.

The protein belongs to the glycosyl hydrolase 64 family. In terms of processing, predicted to be exported by the Tat system. The position of the signal peptide cleavage has been experimentally proven.

The protein localises to the periplasm. It carries out the reaction Hydrolysis of (1-&gt;3)-beta-D-glucosidic linkages in (1-&gt;3)-beta-D-glucans.. Functionally, lysis of cellular walls containing beta-1,3-glucans. Implicated in the defense against fungal pathogens. This is Glucan endo-1,3-beta-glucosidase from Cellulosimicrobium cellulans (Arthrobacter luteus).